The chain runs to 165 residues: Fatty acid-binding protein homolog 3 (165 aa).

The N-terminal stretch at 1 to 19 (MNLYLTLFSFCFLAIMAEA) is a signal peptide.

Belongs to the calycin superfamily. Fatty-acid binding protein (FABP) family. Expressed in presumptive hypodermal cells by the comma stage and in posterior body wall muscle cells by the two-fold stage. From L1 to adult stages, expression continues in body wall muscle cells adjacent to the pseudocoelom, while hypodermal expression is extinguished.

The protein localises to the secreted. Its function is as follows. May play a role in sequestering potentially toxic fatty acids and their peroxidation products, or it may be involved in the maintenance of the impermeable lipid layer of the eggshell. This Caenorhabditis elegans protein is Fatty acid-binding protein homolog 3 (lbp-3).